Reading from the N-terminus, the 164-residue chain is Small ribosomal subunit protein uS5 (164 aa).

An S5 DRBM domain is found at 11–74 (LKEKLISVNR…EKARKNMIII (64 aa)).

Belongs to the universal ribosomal protein uS5 family. As to quaternary structure, part of the 30S ribosomal subunit. Contacts proteins S4 and S8.

Functionally, with S4 and S12 plays an important role in translational accuracy. Located at the back of the 30S subunit body where it stabilizes the conformation of the head with respect to the body. This is Small ribosomal subunit protein uS5 from Buchnera aphidicola subsp. Cinara cedri (strain Cc).